Here is a 182-residue protein sequence, read N- to C-terminus: CDP-diacylglycerol--glycerol-3-phosphate 3-phosphatidyltransferase (182 aa).

Topologically, residues 1-12 (MQLNIPTWLTLF) are cytoplasmic. The chain crosses the membrane as a helical span at residues 13 to 37 (RVVLIPFFVLAFYLPFVWAPMVCAI). The Periplasmic portion of the chain corresponds to 38–60 (IFVFAAATDWFDGFLARRWKQTT). The chain crosses the membrane as a helical span at residues 61-81 (RFGAFLDPVADKVMVAVALVL). Topologically, residues 82 to 86 (VAEHY) are cytoplasmic. A helical membrane pass occupies residues 87–107 (HSWWITLPAATMIAREIIISS). Over 108–145 (LREWMAEIGKRSSVAVSWVGKVKTMAQMGSLVGLLWRP) the chain is Periplasmic. The chain crosses the membrane as a helical span at residues 146–168 (DHNVELASFVLLYIAAVLTFWSM). Over 169–181 (FQYLNAAWSDLLE) the chain is Cytoplasmic.

This sequence belongs to the CDP-alcohol phosphatidyltransferase class-I family.

It is found in the cell inner membrane. The enzyme catalyses a CDP-1,2-diacyl-sn-glycerol + sn-glycerol 3-phosphate = a 1,2-diacyl-sn-glycero-3-phospho-(1'-sn-glycero-3'-phosphate) + CMP + H(+). It functions in the pathway phospholipid metabolism; phosphatidylglycerol biosynthesis; phosphatidylglycerol from CDP-diacylglycerol: step 1/2. Functionally, catalyzes the conversion of cytidine diphosphate diacylglycerol (CDP-DG) and glycerol 3-phosphate into phosphatidylglycerol. Essential for the synthesis of anionic phospholipids, thereby playing a role in balancing the ratio of zwitterionic and anionic phospholipids, which is thought to be important for normal membrane function. The protein is CDP-diacylglycerol--glycerol-3-phosphate 3-phosphatidyltransferase of Yersinia pestis bv. Antiqua (strain Antiqua).